We begin with the raw amino-acid sequence, 441 residues long: Ribosomal protein uS12 methylthiotransferase RimO (441 aa).

One can recognise an MTTase N-terminal domain in the interval 8 to 118; sequence PKIGFVSLGC…VLEHVHHYTP (111 aa). [4Fe-4S] cluster is bound by residues C17, C53, C82, C150, C154, and C157. One can recognise a Radical SAM core domain in the interval 136–373; it reads LTPRHYAYLK…MQLQQQISAE (238 aa). Residues 376–441 enclose the TRAM domain; the sequence is QEKVGREILV…DEYDLWGTRV (66 aa).

It belongs to the methylthiotransferase family. RimO subfamily. Requires [4Fe-4S] cluster as cofactor.

The protein resides in the cytoplasm. The enzyme catalyses L-aspartate(89)-[ribosomal protein uS12]-hydrogen + (sulfur carrier)-SH + AH2 + 2 S-adenosyl-L-methionine = 3-methylsulfanyl-L-aspartate(89)-[ribosomal protein uS12]-hydrogen + (sulfur carrier)-H + 5'-deoxyadenosine + L-methionine + A + S-adenosyl-L-homocysteine + 2 H(+). Functionally, catalyzes the methylthiolation of an aspartic acid residue of ribosomal protein uS12. The protein is Ribosomal protein uS12 methylthiotransferase RimO of Klebsiella pneumoniae subsp. pneumoniae (strain ATCC 700721 / MGH 78578).